We begin with the raw amino-acid sequence, 327 residues long: Serine/threonine-protein phosphatase PP1-1 (327 aa).

Asp63, His65, Asp91, and Asn123 together coordinate Mn(2+). His124 serves as the catalytic Proton donor. Mn(2+)-binding residues include His172 and His247. The interval Gly305–Lys327 is disordered. Thr316 is subject to Phosphothreonine; by CDC2. Over residues Pro317–Lys327 the composition is skewed to basic residues.

The protein belongs to the PPP phosphatase family. PP-1 subfamily. As to quaternary structure, oligomer. It depends on Mn(2+) as a cofactor.

The protein resides in the nucleus. It catalyses the reaction O-phospho-L-seryl-[protein] + H2O = L-seryl-[protein] + phosphate. The catalysed reaction is O-phospho-L-threonyl-[protein] + H2O = L-threonyl-[protein] + phosphate. Essential role in cell cycle control. PP1 is perhaps required for exit from mitosis. This chain is Serine/threonine-protein phosphatase PP1-1 (dis2), found in Schizosaccharomyces pombe (strain 972 / ATCC 24843) (Fission yeast).